A 485-amino-acid chain; its full sequence is Noelin (485 aa).

The first 16 residues, 1–16 (MSVPLLKIGVVLSTMA), serve as a signal peptide directing secretion. N33, N103, N187, N288, N307, N394, N431, and N473 each carry an N-linked (GlcNAc...) asparagine glycan. Positions 87 to 227 (RDARTKQLRQ…LRACMQKLAC (141 aa)) form a coiled coil. An Olfactomedin-like domain is found at 226 to 478 (ACGKLTGISD…QTLYNVTLFH (253 aa)). An intrachain disulfide couples C227 to C409. The Endoplasmic reticulum retention signal signature appears at 482 to 485 (SDEL).

Homotetramer; disulfide-linked. Dimer of dimers, giving rise to a V-shaped homotretramer. Isoform 1 and isoform 3 interact with RTN4R. Identified in a complex with RTN4R and LINGO1. Peripherally associated with AMPAR complex. AMPAR complex consists of an inner core made of 4 pore-forming GluA/GRIA proteins (GRIA1, GRIA2, GRIA3 and GRIA4) and 4 major auxiliary subunits arranged in a twofold symmetry. One of the two pairs of distinct binding sites is occupied either by CNIH2, CNIH3 or CACNG2, CACNG3. The other harbors CACNG2, CACNG3, CACNG4, CACNG8 or GSG1L. This inner core of AMPAR complex is complemented by outer core constituents binding directly to the GluA/GRIA proteins at sites distinct from the interaction sites of the inner core constituents. Outer core constituents include at least PRRT1, PRRT2, CKAMP44/SHISA9, FRRS1L and NRN1. The proteins of the inner and outer core serve as a platform for other, more peripherally associated AMPAR constituents, including OLFM1. Alone or in combination, these auxiliary subunits control the gating and pharmacology of the AMPAR complex and profoundly impact their biogenesis and protein processing. Interacts with OLFM2. Interacts with DTNB. Expressed in the brain cortex, olfactory bulb and vomeronasal neuroepithelium (at protein level). Detected in brain cortex, hippocampus, dorsal root ganglion and olfactory bulb.

The protein resides in the secreted. It localises to the synapse. It is found in the endoplasmic reticulum. The protein localises to the cell projection. Its subcellular location is the axon. The protein resides in the perikaryon. Functionally, contributes to the regulation of axonal growth in the embryonic and adult central nervous system by inhibiting interactions between RTN4R and LINGO1. Inhibits RTN4R-mediated axon growth cone collapse. May play an important role in regulating the production of neural crest cells by the neural tube. May be required for normal responses to olfactory stimuli. This is Noelin (Olfm1) from Mus musculus (Mouse).